Consider the following 388-residue polypeptide: Succinyl-diaminopimelate desuccinylase (388 aa).

His-74 contributes to the Zn(2+) binding site. Asp-76 is a catalytic residue. Asp-107 contacts Zn(2+). Glu-142 serves as the catalytic Proton acceptor. Zn(2+) contacts are provided by Glu-143, Glu-171, and His-360.

This sequence belongs to the peptidase M20A family. DapE subfamily. Homodimer. Zn(2+) is required as a cofactor. It depends on Co(2+) as a cofactor.

The enzyme catalyses N-succinyl-(2S,6S)-2,6-diaminopimelate + H2O = (2S,6S)-2,6-diaminopimelate + succinate. It functions in the pathway amino-acid biosynthesis; L-lysine biosynthesis via DAP pathway; LL-2,6-diaminopimelate from (S)-tetrahydrodipicolinate (succinylase route): step 3/3. Functionally, catalyzes the hydrolysis of N-succinyl-L,L-diaminopimelic acid (SDAP), forming succinate and LL-2,6-diaminopimelate (DAP), an intermediate involved in the bacterial biosynthesis of lysine and meso-diaminopimelic acid, an essential component of bacterial cell walls. This Rhodopseudomonas palustris (strain BisB5) protein is Succinyl-diaminopimelate desuccinylase.